Here is a 224-residue protein sequence, read N- to C-terminus: Tumor protein D52 (224 aa).

Phosphoserine is present on residues S36 and S40. Residues 62–114 (AATISATETLSEEEQEELRRELAKVEEEIQTLSQVLAAKEKHLAEIKRKLGIN) adopt a coiled-coil conformation. S176 is subject to Phosphoserine. A disordered region spans residues 187 to 224 (KVGGTKPAGGDFGEVLNSAANASATTTEPLPEKTQESL). The segment covering 203-213 (NSAANASATTT) has biased composition (low complexity). At S223 the chain carries Phosphoserine.

Belongs to the TPD52 family. As to quaternary structure, forms a homodimer or heterodimer with other members of the family. All isoforms interact with several 14-3-3 proteins. In terms of tissue distribution, isoform 2 is expressed in colon, breast, prostate, pancreas and kidney tumor cell lines. Isoform 2 is expressed at high levels in kidney, prostate, brain, small intestine and pancreas, at moderate levels in placenta and colon, at low levels in lung, liver and heart, and at very low levels in spleen, thymus, peripheral mononuclear blood cells, testis and ovary.

This is Tumor protein D52 (TPD52) from Homo sapiens (Human).